Here is a 396-residue protein sequence, read N- to C-terminus: Proteasome-activating nucleotidase (396 aa).

Positions 16-57 (ITYLKRRIRQLELQVRMLEADKERLERELSRLRSEMSRLRQP) form a coiled coil. ATP is bound by residues 181–186 (GCGKTL) and H320. Residues 394–396 (IYG) are docks into pockets in the proteasome alpha-ring to cause gate opening.

The protein belongs to the AAA ATPase family. Homohexamer. The hexameric complex has a two-ring architecture resembling a top hat that caps the 20S proteasome core at one or both ends. Upon ATP-binding, the C-terminus of PAN interacts with the alpha-rings of the proteasome core by binding to the intersubunit pockets.

Its subcellular location is the cytoplasm. Its function is as follows. ATPase which is responsible for recognizing, binding, unfolding and translocation of substrate proteins into the archaeal 20S proteasome core particle. Is essential for opening the gate of the 20S proteasome via an interaction with its C-terminus, thereby allowing substrate entry and access to the site of proteolysis. Thus, the C-termini of the proteasomal ATPase function like a 'key in a lock' to induce gate opening and therefore regulate proteolysis. Unfolding activity requires energy from ATP hydrolysis, whereas ATP binding alone promotes ATPase-20S proteasome association which triggers gate opening, and supports translocation of unfolded substrates. This is Proteasome-activating nucleotidase from Pyrococcus abyssi (strain GE5 / Orsay).